Consider the following 706-residue polypeptide: Melanopsin (706 aa).

Topologically, residues 1-86 (MTEIPSFQPP…VWDIPPLAHY (86 aa)) are extracellular. Residues N12, N64, and N69 are each glycosylated (N-linked (GlcNAc...) asparagine). The helical transmembrane segment at 87–107 (IVGTAVFCIGCCGMFGNAVVV) threads the bilayer. Residues 108 to 121 (YSFIKSKGLRTPAN) are Cytoplasmic-facing. Residues 122–142 (FFIINLALSDFLMNLTNMPIF) traverse the membrane as a helical segment. At 143-159 (AVNSAFQRWLLSDFACE) the chain is on the extracellular side. C158 and C236 are oxidised to a cystine. Residues 160–180 (LYGFAGGLFGCLSINTLMAIS) traverse the membrane as a helical segment. Residues 181–201 (MDRYLVITKPFLVMRIVTKQR) lie on the Cytoplasmic side of the membrane. The chain crosses the membrane as a helical span at residues 202-222 (VMFAILLLWIWSLVWALPPLF). At 223–248 (GWSAYVSEGFGTSCTFDYMTPKLSYH) the chain is on the extracellular side. A helical transmembrane segment spans residues 249–269 (IFTYIIFFTMYFIPGGVMIYC). Topologically, residues 270-314 (YYNIFATVKSGDKQFGKAVKEMAHEDVKNKAQQERQRKNEIKTAK) are cytoplasmic. Residues 315 to 335 (IAFIVISLFMSAWTPYAVVSA) form a helical membrane-spanning segment. The Extracellular segment spans residues 336 to 351 (LGTLGYQDLVTPYLQS). A helical transmembrane segment spans residues 352-372 (IPAMFAKSSAVYSPIVYAITY). K358 carries the post-translational modification N6-(retinylidene)lysine. At 373–706 (PKFREAVKKH…LSEAHDETVL (334 aa)) the chain is on the cytoplasmic side. Disordered stretches follow at residues 393–446 (SEEE…RQDT), 571–599 (RTESGYDRSQDSQRKKVVGDTHRSRSFNT), and 630–658 (QSSEKHEYDNPAFDEGITEVDTDSENETE). Composition is skewed to low complexity over residues 404-418 (QSSASASMSMTQTTA) and 426-442 (SVDSGSSVSVDDSSGVS). Residues 571 to 593 (RTESGYDRSQDSQRKKVVGDTHR) are compositionally biased toward basic and acidic residues. The segment covering 645–658 (GITEVDTDSENETE) has biased composition (acidic residues).

Belongs to the G-protein coupled receptor 1 family. Opsin subfamily. In terms of tissue distribution, expressed in Joseph cells and photoreceptor cells of the dorsal ocelli.

The protein localises to the cell membrane. Its function is as follows. Photoreceptor implicated in non-image-forming responses to light. Photoisomerizes covalently bound all-trans retinal back to 11-cis retinal. Most likely coupled to the G(q) signaling cascade. The sequence is that of Melanopsin from Branchiostoma belcheri (Amphioxus).